A 530-amino-acid chain; its full sequence is Chaperone Ric-8A (530 aa).

The residue at position 435 (serine 435) is a Phosphoserine. Threonine 440 and threonine 442 each carry phosphothreonine. Residues serine 501, serine 522, serine 523, and serine 527 each carry the phosphoserine modification.

Belongs to the synembryn family. As to quaternary structure, interacts with GDP-bound G alpha proteins GNAI1, GNAO1 and GNAQ, and with GNA13 with lower affinity. Does not interact with G-alpha proteins when they are in complex with subunits beta and gamma. Interacts (via C-terminus) with RGS14; the interaction stimulates the dissociation of the complex between RGS14 and the active GTP-bound form of GNAI1. Interacts with NCS1; interaction is favored in the absence of Ca(2+) and myristoylation of NCS1 is not required. Post-translationally, phosphorylated at Ser-435 and Thr-440 by CK2, stabilizing its interface with G alpha proteins.

It localises to the cytoplasm. It is found in the cell cortex. In terms of biological role, chaperone that specifically binds and folds nascent G alpha proteins prior to G protein heterotrimer formation, promoting their stability and activity: folds GNAI1, GNAO1, GNA13 and GNAQ. Does not fold G(s) G-alpha proteins GNAS nor GNAL. Also acts as a guanine nucleotide exchange factor (GEF) for G alpha proteins by stimulating exchange of bound GDP for free GTP. Involved in regulation of microtubule pulling forces during mitotic movement of chromosomes by stimulating G(i)-alpha protein (GNAI1), possibly leading to release G(i)-alpha-GTP and NuMA proteins from the NuMA-GPSM2-G(i)-alpha-GDP complex. Also acts as an activator for G(q)-alpha (GNAQ) protein by enhancing the G(q)-coupled receptor-mediated ERK activation. This chain is Chaperone Ric-8A (RIC8A), found in Macaca fascicularis (Crab-eating macaque).